The sequence spans 139 residues: Large ribosomal subunit protein uL16 (139 aa).

Belongs to the universal ribosomal protein uL16 family. Part of the 50S ribosomal subunit.

In terms of biological role, binds 23S rRNA and is also seen to make contacts with the A and possibly P site tRNAs. This chain is Large ribosomal subunit protein uL16, found in Microcystis aeruginosa (strain NIES-843 / IAM M-2473).